The chain runs to 535 residues: MAKKVAVIGAGVSGLISLKCCVDEGLEPTCFERTEDIGGLWRFKENVEDGRASIYKSVITNTSKEMSCFSDFPMPEDFPNFLHNSKLLEYFRLFAKKFDLLKYIQFQTTVLTVKKHPDFSSSGQWEVVTQSDGKEQSAVFDAVMVCSGHHILPHIPLKSFPGIERFKGQYFHSRQYKHPAGFEGKRILVIGIGNSASDIASELSKNAAQVFISTRNGSWVMSRISEDGYPWDMVFHTRFKSMLRNILPRTVSKWMMEQQLNRWFNHANYSLEPKNKYLMKEPILNDDLPSRILYGAVKVKSRVTQLTETSALFEDGTVEEDIDVIVFATGYTFSFPFLEESLVKIEHNMVSLYKYMFPPQLEKPTLTCMGLIQPLGSIFPTVELQARWATRVFKGLCHLPSEKTMMEDIIKRNEKRIDLFGESQSQIVQTNYVDYLDELALEIGAKPDLISFLLKDPELAVKLCFGPCNSYQYRLVGPGQWEGARRAILTQKQRILKPLKTRSVKAAPNLSASFLMKILALVAVFVAFFSQLYGF.

Position 2 is an N-acetylalanine (Ala2). FAD-binding positions include 9–13 (GAGVS), Glu32, 40–41 (LW), and 61–62 (NT). NADP(+)-binding positions include 60-61 (TN) and 195-198 (SASD). Residue Lys492 forms a Glycyl lysine isopeptide (Lys-Gly) (interchain with G-Cter in SUMO) linkage. Residues 510 to 530 (LSASFLMKILALVAVFVAFFS) traverse the membrane as a helical segment.

This sequence belongs to the FMO family. FAD is required as a cofactor. Mg(2+) serves as cofactor. In terms of tissue distribution, lung.

It localises to the microsome membrane. The protein localises to the endoplasmic reticulum membrane. Catalyzes the oxidative metabolism of numerous xenobiotics, including mainly therapeutic drugs and insecticides that contain a soft nucleophile, most commonly nitrogen and sulfur and participates to their bioactivation. This Cavia porcellus (Guinea pig) protein is Dimethylaniline monooxygenase [N-oxide-forming] 2.